Consider the following 434-residue polypeptide: Rubisco accumulation factor 1.1, chloroplastic (434 aa).

The N-terminal 51 residues, 1–51 (MLSLTATTLSSSIFTQSKTHGFFNTRPVYRKPFTTITSALIPASNRQAPPK), are a transit peptide targeting the chloroplast. Positions 65–254 (IPPKFRSLDT…KAKKAVLREL (190 aa)) are N-terminal alpha-helix. Positions 273 to 419 (VPVVRLRFGE…GMVVLVVRPP (147 aa)) are C-terminal beta sheet.

The protein belongs to the RAF family. As to quaternary structure, homodimer.

The protein localises to the plastid. The protein resides in the chloroplast. Functionally, required for assembly or stability of RuBisCO. Acts at a postchaperonin step to fold and/or assemble the large subunit (rbcL) into RuBisCO. RAF1 binds first to a rbcL dimer (rbcL(2)), leading to a rbcL(8)-RAF1(4) complex formation. In the next step, RBCS displaces RAF1, thus resulting in holoenzyme formation. This chain is Rubisco accumulation factor 1.1, chloroplastic, found in Arabidopsis thaliana (Mouse-ear cress).